Reading from the N-terminus, the 86-residue chain is Large ribosomal subunit protein bL31 (86 aa).

Positions 66–86 (GMGSANSATSKEQKADKDSQK) are disordered. Positions 76–86 (KEQKADKDSQK) are enriched in basic and acidic residues.

The protein belongs to the bacterial ribosomal protein bL31 family. Type A subfamily. As to quaternary structure, part of the 50S ribosomal subunit.

In terms of biological role, binds the 23S rRNA. This Prochlorococcus marinus (strain MIT 9215) protein is Large ribosomal subunit protein bL31.